The primary structure comprises 426 residues: Serine--tRNA ligase (426 aa).

230-232 lines the L-serine pocket; the sequence is TAE. 261 to 263 is an ATP binding site; it reads RSE. Glu-284 is a binding site for L-serine. An ATP-binding site is contributed by 348 to 351; the sequence is EISS. Ser-384 serves as a coordination point for L-serine.

It belongs to the class-II aminoacyl-tRNA synthetase family. Type-1 seryl-tRNA synthetase subfamily. In terms of assembly, homodimer. The tRNA molecule binds across the dimer.

It localises to the cytoplasm. The catalysed reaction is tRNA(Ser) + L-serine + ATP = L-seryl-tRNA(Ser) + AMP + diphosphate + H(+). It carries out the reaction tRNA(Sec) + L-serine + ATP = L-seryl-tRNA(Sec) + AMP + diphosphate + H(+). Its pathway is aminoacyl-tRNA biosynthesis; selenocysteinyl-tRNA(Sec) biosynthesis; L-seryl-tRNA(Sec) from L-serine and tRNA(Sec): step 1/1. Functionally, catalyzes the attachment of serine to tRNA(Ser). Is also able to aminoacylate tRNA(Sec) with serine, to form the misacylated tRNA L-seryl-tRNA(Sec), which will be further converted into selenocysteinyl-tRNA(Sec). The sequence is that of Serine--tRNA ligase from Erythrobacter litoralis (strain HTCC2594).